A 463-amino-acid polypeptide reads, in one-letter code: Methionine aminopeptidase 2-1 (463 aa).

Residues 1–98 (MGSKTPEEQI…PPRVPLSDLF (98 aa)) are disordered. The segment covering 30 to 45 (RGTHLSRDGDGSLGDH) has biased composition (basic and acidic residues). Positions 46-55 (GDDDDADEDD) are enriched in acidic residues. The segment covering 69–81 (KKKKRPKKKKKPA) has biased composition (basic residues). H214 serves as a coordination point for substrate. A divalent metal cation contacts are provided by D235, D246, and H315. H323 is a binding site for substrate. 2 residues coordinate a divalent metal cation: E348 and E444.

Belongs to the peptidase M24A family. Methionine aminopeptidase eukaryotic type 2 subfamily. Co(2+) serves as cofactor. Requires Zn(2+) as cofactor. Mn(2+) is required as a cofactor. It depends on Fe(2+) as a cofactor.

It is found in the cytoplasm. The enzyme catalyses Release of N-terminal amino acids, preferentially methionine, from peptides and arylamides.. In terms of biological role, cotranslationally removes the N-terminal methionine from nascent proteins. The N-terminal methionine is often cleaved when the second residue in the primary sequence is small and uncharged (Met-Ala-, Cys, Gly, Pro, Ser, Thr, or Val). In Colletotrichum graminicola (strain M1.001 / M2 / FGSC 10212) (Maize anthracnose fungus), this protein is Methionine aminopeptidase 2-1.